A 366-amino-acid chain; its full sequence is MTVTGIIAEFNPFHYGHQYLLSQARGLKIVAMSGNFVQRGEPALVDKWVRAQMALENGADLVVELPFLVSVQSADYFAQGAVDILMRLGIDTLAFGTEQLFDYQKLSRLYSEQAEHMTAYLAALPDHLSYPQKTQSMWEAFAGLSATGDRPNHLLALSYVKASAGKKLQLQPIKRLGAGFHSEAKDQCLSSATAIRKHIADRAFVEKSSPNAALILRAPQVTWEHYFPLLKYHILTSPDLTEFFQVNDELASRISAAIRSIATVDELVEAVATKHYTKARVRRVLTYILVKAVEAPLPEGIHVLGFSKKGQAHLKTIKASVPLISRIGAKPWDQLTQRADTVYQLGHMDMPEQTWGRVPIRPGAMN.

ATP is bound by residues 7–20 (IAEF…HQYL), glycine 96, asparagine 152, and arginine 175.

This sequence belongs to the TmcAL family.

Its subcellular location is the cytoplasm. It carries out the reaction cytidine(34) in elongator tRNA(Met) + acetate + ATP = N(4)-acetylcytidine(34) in elongator tRNA(Met) + AMP + diphosphate. Catalyzes the formation of N(4)-acetylcytidine (ac(4)C) at the wobble position of elongator tRNA(Met), using acetate and ATP as substrates. First activates an acetate ion to form acetyladenylate (Ac-AMP) and then transfers the acetyl group to tRNA to form ac(4)C34. The protein is tRNA(Met) cytidine acetate ligase of Streptococcus equi subsp. zooepidemicus (strain H70).